A 106-amino-acid chain; its full sequence is Large ribosomal subunit protein uL24 (106 aa).

Residues 84-97 (EKIGRELGAKEKAR) show a composition bias toward basic and acidic residues. Residues 84 to 106 (EKIGRELGAKEKARLQKRKAAAK) form a disordered region.

It belongs to the universal ribosomal protein uL24 family. As to quaternary structure, part of the 50S ribosomal subunit.

One of two assembly initiator proteins, it binds directly to the 5'-end of the 23S rRNA, where it nucleates assembly of the 50S subunit. In terms of biological role, one of the proteins that surrounds the polypeptide exit tunnel on the outside of the subunit. The protein is Large ribosomal subunit protein uL24 of Anaeromyxobacter dehalogenans (strain 2CP-C).